Here is a 398-residue protein sequence, read N- to C-terminus: S-adenosylmethionine synthase (398 aa).

An ATP-binding site is contributed by His16. Residue Asp18 coordinates Mg(2+). Glu51 contacts K(+). Residues Glu64 and Gln108 each contribute to the L-methionine site. Residues 108-118 (QSADIAQGVDA) are flexible loop. ATP is bound by residues 176 to 178 (DSK), 242 to 243 (KF), Asp251, 257 to 258 (RK), Ala274, and Lys278. Asp251 contributes to the L-methionine binding site. Lys282 contributes to the L-methionine binding site.

This sequence belongs to the AdoMet synthase family. As to quaternary structure, homotetramer; dimer of dimers. Mg(2+) serves as cofactor. The cofactor is K(+).

The protein resides in the cytoplasm. The enzyme catalyses L-methionine + ATP + H2O = S-adenosyl-L-methionine + phosphate + diphosphate. The protein operates within amino-acid biosynthesis; S-adenosyl-L-methionine biosynthesis; S-adenosyl-L-methionine from L-methionine: step 1/1. In terms of biological role, catalyzes the formation of S-adenosylmethionine (AdoMet) from methionine and ATP. The overall synthetic reaction is composed of two sequential steps, AdoMet formation and the subsequent tripolyphosphate hydrolysis which occurs prior to release of AdoMet from the enzyme. The protein is S-adenosylmethionine synthase of Bradyrhizobium diazoefficiens (strain JCM 10833 / BCRC 13528 / IAM 13628 / NBRC 14792 / USDA 110).